The chain runs to 253 residues: MFAIALLSFLVVLINAHPPMHAEMHSAVVTLANEIDTNYLTSPAKIKIVAPLESALIPGGETYQLRCDIMSTPAATIHWKFNGKLIQGSNELNVEEKLLNFGKAIVDTGIVASILTIQCPSAENSGTYSCVGYNGHQTIETVAEVEIEGEASGCRSNHKSAPEIVFWTDSRFEMTGNVATLVCRANQQVDWVWMSNDELVKNNDKFTVLSNGDLVIKNIVWDDMGTYTCIARNQFGEARQETFLYPTAKKSSF.

The first 16 residues, 1–16 (MFAIALLSFLVVLINA), serve as a signal peptide directing secretion. Ig-like C2-type domains lie at 43 to 146 (PAKI…AEVE) and 162 to 245 (PEIV…TFLY). Disulfide bonds link Cys67–Cys130 and Cys183–Cys229.

In terms of tissue distribution, expressed in PVT, ASK, BAG, M2 and ASI neurons. In L1 larvae, expressed in pharyngeal ectoderm and mesoderm.

The protein localises to the secreted. In terms of biological role, required for maintaining axon position of PVQ and PVP neurons postembryonically in the ventral nerve cord (VNC) by preventing axons drifting into the opposite side of the VNC that could occur during body growth and movement. The polypeptide is Zwei Ig domain protein zig-4 (Caenorhabditis elegans).